The sequence spans 91 residues: Small ribosomal subunit protein bS20 (91 aa).

It belongs to the bacterial ribosomal protein bS20 family.

Its function is as follows. Binds directly to 16S ribosomal RNA. The protein is Small ribosomal subunit protein bS20 of Caulobacter vibrioides (strain ATCC 19089 / CIP 103742 / CB 15) (Caulobacter crescentus).